Here is a 253-residue protein sequence, read N- to C-terminus: Proteasome subunit alpha type-3 (253 aa).

A disordered region spans residues 230–253 (ELTEKARKAGDAANKDEDSDNETH). Residues 231–253 (LTEKARKAGDAANKDEDSDNETH) are compositionally biased toward basic and acidic residues. Residue Ser248 is modified to Phosphoserine.

The protein belongs to the peptidase T1A family. In terms of assembly, the 26S proteasome consists of a 20S proteasome core and two 19S regulatory subunits. The 20S proteasome core is composed of 28 subunits that are arranged in four stacked rings, resulting in a barrel-shaped structure. The two end rings are each formed by seven alpha subunits, and the two central rings are each formed by seven beta subunits. The catalytic chamber with the active sites is on the inside of the barrel. Interacts with ntc.

Its subcellular location is the cytoplasm. It is found in the nucleus. Functionally, the proteasome is a multicatalytic proteinase complex which is characterized by its ability to cleave peptides with Arg, Phe, Tyr, Leu, and Glu adjacent to the leaving group at neutral or slightly basic pH. The proteasome has an ATP-dependent proteolytic activity. The polypeptide is Proteasome subunit alpha type-3 (Prosalpha7) (Drosophila melanogaster (Fruit fly)).